A 194-amino-acid chain; its full sequence is uncharacterized protein (194 aa).

Disordered stretches follow at residues 1–72 (MAAK…PAAE) and 113–194 (VLIP…SLAV). Over residues 26–39 (AEGRSSEGRKERTA) the composition is skewed to basic and acidic residues. The segment covering 146-171 (GSSSTSRNQVASLAYRTQNTAASQPR) has biased composition (polar residues).

This is an uncharacterized protein from Homo sapiens (Human).